Consider the following 194-residue polypeptide: UPF0215 protein TV0037 (194 aa).

It belongs to the UPF0215 family.

The sequence is that of UPF0215 protein TV0037 from Thermoplasma volcanium (strain ATCC 51530 / DSM 4299 / JCM 9571 / NBRC 15438 / GSS1).